A 226-amino-acid chain; its full sequence is tRNA (guanine-N(7)-)-methyltransferase (226 aa).

Positions 1-22 (MTTPQQPHGPLRSFGRLKSRPV) are disordered. 4 residues coordinate S-adenosyl-L-methionine: Glu-59, Glu-84, Asp-111, and Asp-133. The active site involves Asp-133. Residue Lys-137 coordinates substrate. The segment at 139–144 (RHNKRR) is interaction with RNA. Substrate is bound by residues Asp-169 and 206–209 (TRYE).

This sequence belongs to the class I-like SAM-binding methyltransferase superfamily. TrmB family.

The enzyme catalyses guanosine(46) in tRNA + S-adenosyl-L-methionine = N(7)-methylguanosine(46) in tRNA + S-adenosyl-L-homocysteine. It functions in the pathway tRNA modification; N(7)-methylguanine-tRNA biosynthesis. Its function is as follows. Catalyzes the formation of N(7)-methylguanine at position 46 (m7G46) in tRNA. This Caulobacter vibrioides (strain ATCC 19089 / CIP 103742 / CB 15) (Caulobacter crescentus) protein is tRNA (guanine-N(7)-)-methyltransferase.